A 531-amino-acid polypeptide reads, in one-letter code: Maturase K (531 aa).

The protein belongs to the intron maturase 2 family. MatK subfamily.

It localises to the plastid. The protein resides in the chloroplast. Usually encoded in the trnK tRNA gene intron. Probably assists in splicing its own and other chloroplast group II introns. This chain is Maturase K, found in Ephedra sinica (Chinese ephedra).